The sequence spans 529 residues: Peptide chain release factor 3 (529 aa).

The tr-type G domain maps to 11-280 (AKRRTFAIIS…GLVAWAPAPM (270 aa)). Residues 20–27 (SHPDAGKT), 88–92 (DTPGH), and 142–145 (NKLD) contribute to the GTP site.

It belongs to the TRAFAC class translation factor GTPase superfamily. Classic translation factor GTPase family. PrfC subfamily.

The protein resides in the cytoplasm. Functionally, increases the formation of ribosomal termination complexes and stimulates activities of RF-1 and RF-2. It binds guanine nucleotides and has strong preference for UGA stop codons. It may interact directly with the ribosome. The stimulation of RF-1 and RF-2 is significantly reduced by GTP and GDP, but not by GMP. The sequence is that of Peptide chain release factor 3 (prfC) from Salmonella typhi.